The following is a 320-amino-acid chain: Metapyrocatechase 2 (320 aa).

Disordered stretches follow at residues 1-21 (MDTH…RPRH) and 131-153 (GPKT…GQRG). VOC domains are found at residues 25–131 (SIDH…VKIG) and 167–282 (RLSH…YSAD). His-170, His-227, and Glu-278 together coordinate Fe cation.

This sequence belongs to the extradiol ring-cleavage dioxygenase family. Fe(2+) serves as cofactor.

It catalyses the reaction catechol + O2 = (2Z,4E)-2-hydroxy-6-oxohexa-2,4-dienoate + H(+). This is Metapyrocatechase 2 (mcpII) from Cupriavidus necator (Alcaligenes eutrophus).